A 294-amino-acid polypeptide reads, in one-letter code: NAD kinase (294 aa).

Aspartate 74 serves as the catalytic Proton acceptor. NAD(+) is bound by residues aspartate 74–glycine 75, asparagine 148–glutamate 149, histidine 159, arginine 176, aspartate 178, threonine 189–serine 194, and glutamine 249.

Belongs to the NAD kinase family. It depends on a divalent metal cation as a cofactor.

It is found in the cytoplasm. The catalysed reaction is NAD(+) + ATP = ADP + NADP(+) + H(+). Its function is as follows. Involved in the regulation of the intracellular balance of NAD and NADP, and is a key enzyme in the biosynthesis of NADP. Catalyzes specifically the phosphorylation on 2'-hydroxyl of the adenosine moiety of NAD to yield NADP. This Vibrio atlanticus (strain LGP32) (Vibrio splendidus (strain Mel32)) protein is NAD kinase.